The sequence spans 296 residues: Glucokinase (296 aa).

The protein belongs to the ROK (NagC/XylR) family. As to quaternary structure, homodimer. A divalent metal cation serves as cofactor.

It carries out the reaction D-glucose + ATP = D-glucose 6-phosphate + ADP + H(+). Catalyzes the phosphorylation of D-glucose to D-glucose 6-phosphate using ATP as the phosphate donor. Has a broad hexose specificity, and in addition to glucose, which shows the highest catalytic efficiency, it can also phosphorylate fructose, mannose, galactose and sorbitol. Can also use CTP, GTP or UTP as phosphoryl donor. The chain is Glucokinase from Pyrobaculum calidifontis (strain DSM 21063 / JCM 11548 / VA1).